The chain runs to 388 residues: Quinolone resistance protein NorA (388 aa).

The next 12 membrane-spanning stretches (helical) occupy residues 5–25, 42–62, 69–89, 99–119, 129–149, 157–177, 201–221, 239–259, 269–289, 293–313, 331–351, and 355–375; these read IFVL…VIPV, LLVA…GTLA, LIIC…AVGH, VIGG…IADV, FGYM…IGGF, MPFY…VVLI, WKVF…LSAF, DISI…IYFF, LTFI…LVIA, WTIM…RPAI, LNST…GALF, and IEAP…IVLI.

It belongs to the major facilitator superfamily. TCR/Tet family.

The protein localises to the cell membrane. Involved in quinolone resistance. May constitute a membrane-associated active efflux pump of hydrophilic quinolones. The chain is Quinolone resistance protein NorA (norA) from Staphylococcus aureus (strain MRSA252).